We begin with the raw amino-acid sequence, 413 residues long: Probable Xaa-Pro aminopeptidase UREG_07123 (413 aa).

The Mn(2+) site is built by Asp194, Asp205, Glu340, and Glu379.

Belongs to the peptidase M24B family. Requires Mn(2+) as cofactor.

The enzyme catalyses Release of any N-terminal amino acid, including proline, that is linked to proline, even from a dipeptide or tripeptide.. Catalyzes the removal of a penultimate prolyl residue from the N-termini of peptides. This is Probable Xaa-Pro aminopeptidase UREG_07123 from Uncinocarpus reesii (strain UAMH 1704).